Reading from the N-terminus, the 95-residue chain is Putative regulatory protein Pmob_0099 (95 aa).

Belongs to the RemA family.

In Petrotoga mobilis (strain DSM 10674 / SJ95), this protein is Putative regulatory protein Pmob_0099.